Here is a 462-residue protein sequence, read N- to C-terminus: Asparagine--tRNA ligase (462 aa).

It belongs to the class-II aminoacyl-tRNA synthetase family. As to quaternary structure, homodimer.

Its subcellular location is the cytoplasm. The catalysed reaction is tRNA(Asn) + L-asparagine + ATP = L-asparaginyl-tRNA(Asn) + AMP + diphosphate + H(+). The protein is Asparagine--tRNA ligase of Synechocystis sp. (strain ATCC 27184 / PCC 6803 / Kazusa).